A 98-amino-acid polypeptide reads, in one-letter code: Dehydrogenase acuH (98 aa).

Its pathway is secondary metabolite biosynthesis. Dehydrogenase; part of the gene cluster that mediates the biosynthesis of aculins. The pathway begins with the synthesis of 6-methylsalicylic acid by the polyketide synthase (PKS) acuA via condensation of acetate and malonate units. The 6-methylsalicylic acid decarboxylase acuB then catalyzes the decarboxylation of 6-methylsalicylic acid to yield m-cresol (also known as 3-methylphenol). These first reactions occur in the cytosol. The intermediate m-cresol is then transported into the endoplasmic reticulum where the cytochrome P450 monooxygenase acuC converts it to m-hydroxybenzyl alcohol, which is further converted to gentisyl alcohol by the cytochrome P450 monooxygenase acuD. Gentisyl alcohol is further oxidized by the oxidoreductase acuE that probably catalyzes hydroxylation of the aromatic ring. The aromatic system might then be opened by oxidation through a Baeyer-Villiger type of oxidation, which could be catalyzed by acuF, with the carboxylic acid at C-1 subsequently reduced to an aldehyde by acuG. Subsequently, a hemiacetal is formed, before the dehydrogenase acuH would reduce the double bond between C-4 and C-6. Finally, keto-enol tautomerism results in formation of aculinic acid, which exists as two diastereomers (both R/S configurations at C-1) by non-enzymatic hemiacetal formation. The carboxypeptidase acuI could be involved in the linking of aculinic acid to an aculene A moiety produced by the aculene biosynthesis cluster and which leads to the production of aculin A. AcuI may also be involved in the attachment of proline to aculinic acid to form epi-aculins A and B. This Aspergillus aculeatus (strain ATCC 16872 / CBS 172.66 / WB 5094) protein is Dehydrogenase acuH.